We begin with the raw amino-acid sequence, 677 residues long: WD repeat-containing protein 48 (677 aa).

Phosphotyrosine is present on Y28. 8 WD repeats span residues 28–67 (YNRN…QDPY), 73–112 (HHTD…CMST), 115–154 (THKD…ALTA), 166–205 (GNKD…KLMK), 208–247 (GHTD…CIAT), 250–289 (VHDE…IRVL), 292–334 (EEKA…NFRA), and 358–397 (KGGA…KVED). K214 carries the N6-acetyllysine modification. N6-acetyllysine is present on K578. Residues 607–628 (LDNESQTTSSSNNEKPGEQEKE) are disordered. The segment covering 609–620 (NESQTTSSSNNE) has biased composition (low complexity). At T613 the chain carries Phosphothreonine.

This sequence belongs to the WD repeat WDR48 family. Interacts with USP46. Interacts with USP1. Interacts with USP12. Component of the USP12-WDR20-WDR48 deubiquitinating complex. Component of the USP12-DMWD-WDR48 deubiquitinating complex. Interacts with PHLPP1. Interacts with RAD51AP1; the interaction is direct and promotes formation of a trimeric complex with RAD51 via RAD51AP1. Interacts with ATAD5; the interaction regulates USP1-mediated PCNA deubiquitination. Interacts with RAD51; the interaction is enhanced under replication stress. Interacts with ITCH; the interaction is more efficient when both USP12 and WDR48/UAF1 are involved and may facilitate recruitment of the USP12 deubiquitinating complex to Notch. In terms of assembly, (Microbial infection) Interacts with papillomavirus HPV11 E1 protein. As to quaternary structure, (Microbial infection) Interacts with Saimiriine herpesvirus TIP protein. (Microbial infection) Interacts with human cytomegalovirus protein UL138. In terms of assembly, (Microbial infection) Interacts with Epstein-Barr virus protein EBNA3. Ubiquitous.

Its subcellular location is the nucleus. It is found in the cytoplasm. The protein localises to the lysosome. It localises to the late endosome. Regulator of deubiquitinating complexes, which acts as a strong activator of USP1, USP12 and USP46. Enhances the USP1-mediated deubiquitination of FANCD2; USP1 being almost inactive by itself. Activates deubiquitination by increasing the catalytic turnover without increasing the affinity of deubiquitinating enzymes for the substrate. Also activates deubiquitinating activity of complexes containing USP12. In complex with USP12, acts as a potential tumor suppressor by positively regulating PHLPP1 stability. Docks at the distal end of the USP12 fingers domain and induces a cascade of structural changes leading to the activation of the enzyme. Together with RAD51AP1, promotes DNA repair by stimulating RAD51-mediated homologous recombination. Binds single-stranded DNA (ssDNA) and double-stranded DNA (dsDNA). DNA-binding is required both for USP1-mediated deubiquitination of FANCD2 and stimulation of RAD51-mediated homologous recombination: both WDR48/UAF1 and RAD51AP1 have coordinated role in DNA-binding during these processes. Together with ATAD5 and by regulating USP1 activity, has a role in PCNA-mediated translesion synthesis (TLS) by deubiquitinating monoubiquitinated PCNA. Together with ATAD5, has a role in recruiting RAD51 to stalled forks during replication stress. Its function is as follows. (Microbial infection) In case of infection by Herpesvirus saimiri, may play a role in vesicular transport or membrane fusion events necessary for transport to lysosomes. Induces lysosomal vesicle formation via interaction with Herpesvirus saimiri tyrosine kinase-interacting protein (TIP). Subsequently, TIP recruits tyrosine-protein kinase LCK, resulting in down-regulation of T-cell antigen receptor TCR. May play a role in generation of enlarged endosomal vesicles via interaction with TIP. In case of infection by papillomavirus HPV11, promotes the maintenance of the viral genome via its interaction with HPV11 helicase E1. The sequence is that of WD repeat-containing protein 48 from Homo sapiens (Human).